We begin with the raw amino-acid sequence, 308 residues long: Serine/threonine-protein phosphatase 4 catalytic subunit (308 aa).

Residues D51, H53, D79, and N111 each coordinate Mn(2+). H112 serves as the catalytic Proton donor. Mn(2+)-binding residues include H161 and H235.

The protein belongs to the PPP phosphatase family. PP-4 (PP-X) subfamily. As to quaternary structure, catalytic subunit of the histone H2A phosphatase complex (HTP-C) containing PPH3, PSY2 and PSY4. Inactivated in a complex with phosphatase methylesterase PPE1 (PP2Ai). Interacts with phosphatase 2A activator RRD1, which can reactivate PP2Ai by dissociating the catalytic subunit from the complex. Interacts with SPT5 and TAP42. It depends on Mn(2+) as a cofactor. Reversibly methyl esterified on Leu-308 by leucine carboxyl methyltransferase 1 (PPM1) and protein phosphatase methylesterase 1 (PPE1). Carboxyl methylation influences the affinity of the catalytic subunit for the different regulatory subunits, thereby modulating the PP2A holoenzyme's substrate specificity, enzyme activity and cellular localization.

It localises to the cytoplasm. The protein localises to the nucleus. It catalyses the reaction O-phospho-L-seryl-[protein] + H2O = L-seryl-[protein] + phosphate. The catalysed reaction is O-phospho-L-threonyl-[protein] + H2O = L-threonyl-[protein] + phosphate. In terms of biological role, forms the histone H2A phosphatase complex in association with the regulatory subunits PSY2 and PSY4, which dephosphorylates H2AS128ph (gamma-H2A) that has been displaced from sites of DNA lesions in the double-stranded DNA break repair process. Dephosphorylation is necessary for efficient recovery from the DNA damage checkpoint. PPH3 is directly involved in the dephosphorylation and activation of the transcription factor GLN3 in response to nutrient availability. This chain is Serine/threonine-protein phosphatase 4 catalytic subunit (PPH3), found in Saccharomyces cerevisiae (strain ATCC 204508 / S288c) (Baker's yeast).